A 102-amino-acid chain; its full sequence is Small ribosomal subunit protein uS10 (102 aa).

It belongs to the universal ribosomal protein uS10 family. In terms of assembly, part of the 30S ribosomal subunit.

Its function is as follows. Involved in the binding of tRNA to the ribosomes. This chain is Small ribosomal subunit protein uS10, found in Lactococcus lactis subsp. lactis (strain IL1403) (Streptococcus lactis).